We begin with the raw amino-acid sequence, 525 residues long: MLECLSALLVLFAGGGGSVLAAVQSKTVADPNLCPGYNSQLISPFLSSCKRNLSECVSRYFDEQYAFCRSCVTVNNETMEDLDNCKCLQCALSSLNNSCFHDYCTSKDEYDKLQIVVEQFQLTNGVLDDGEILKPRGNKFSSRKLSYFVGQNNTLFRNPLQFEKNQLISALLTSLTNNQKTISSVDMFEVVDANNEVQYLRERTISGKTLSPATGYEEENDGDCSVKDKKWEGKIEYHENKKVSSENCSKDTDDKSGSKKERNTKAPLFHTATEIHMTRWSSWRPKKIFTRYLVNEYQSPKIITTVNRFYRTKTDTETGTTLITSTKAKRRWFPRTKIVTSTATSTFLSITTTTTTNAIATKSLVAVLNPDGLNKKAGINFGLFSANGELASPDEGGTPTVVRRDKISDPGAANEQATLFSTTFSQVPHLPELDSGEFISAASQLDERIFIFTAITVSITTLMMLGFSYRSRVSFRDHSIDDSDDDNDWSDDEVEFDEEYFYSLPVSIPEKGISLDKMAQQLGVE.

Residues 1–21 (MLECLSALLVLFAGGGGSVLA) form the signal peptide. Topologically, residues 22-448 (AVQSKTVADP…ISAASQLDER (427 aa)) are extracellular. The disordered stretch occupies residues 242–264 (KVSSENCSKDTDDKSGSKKERNT). A helical membrane pass occupies residues 449–469 (IFIFTAITVSITTLMMLGFSY). Topologically, residues 470–525 (RSRVSFRDHSIDDSDDDNDWSDDEVEFDEEYFYSLPVSIPEKGISLDKMAQQLGVE) are cytoplasmic.

The protein resides in the membrane. This is an uncharacterized protein from Saccharomyces cerevisiae (strain RM11-1a) (Baker's yeast).